A 547-amino-acid chain; its full sequence is Chaperonin GroEL (547 aa).

ATP-binding positions include Thr30–Pro33, Lys51, Asp87–Thr91, Gly415, Asn479–Ala481, and Asp495.

It belongs to the chaperonin (HSP60) family. Forms a cylinder of 14 subunits composed of two heptameric rings stacked back-to-back. Interacts with the co-chaperonin GroES.

The protein resides in the cytoplasm. The catalysed reaction is ATP + H2O + a folded polypeptide = ADP + phosphate + an unfolded polypeptide.. Functionally, together with its co-chaperonin GroES, plays an essential role in assisting protein folding. The GroEL-GroES system forms a nano-cage that allows encapsulation of the non-native substrate proteins and provides a physical environment optimized to promote and accelerate protein folding. This is Chaperonin GroEL from Pseudomonas paraeruginosa (strain DSM 24068 / PA7) (Pseudomonas aeruginosa (strain PA7)).